We begin with the raw amino-acid sequence, 209 residues long: ATP-dependent Clp protease proteolytic subunit (209 aa).

Catalysis depends on serine 113, which acts as the Nucleophile. Residue histidine 138 is part of the active site.

It belongs to the peptidase S14 family. In terms of assembly, fourteen ClpP subunits assemble into 2 heptameric rings which stack back to back to give a disk-like structure with a central cavity, resembling the structure of eukaryotic proteasomes.

The protein localises to the cytoplasm. The enzyme catalyses Hydrolysis of proteins to small peptides in the presence of ATP and magnesium. alpha-casein is the usual test substrate. In the absence of ATP, only oligopeptides shorter than five residues are hydrolyzed (such as succinyl-Leu-Tyr-|-NHMec, and Leu-Tyr-Leu-|-Tyr-Trp, in which cleavage of the -Tyr-|-Leu- and -Tyr-|-Trp bonds also occurs).. Cleaves peptides in various proteins in a process that requires ATP hydrolysis. Has a chymotrypsin-like activity. Plays a major role in the degradation of misfolded proteins. The polypeptide is ATP-dependent Clp protease proteolytic subunit (Blochmanniella floridana).